A 478-amino-acid polypeptide reads, in one-letter code: Cytochrome c-552 (478 aa).

The first 26 residues, 1–26, serve as a signal peptide directing secretion; the sequence is MTRIKINARRIFSLLIPFFFFTSVHA. A heme c-binding site is contributed by H94. C122, C125, and K126 together coordinate heme. C160, C163, H164, C209, C212, and H213 together coordinate heme c. The Ca(2+) site is built by E215, Y216, K261, and Q263. A substrate-binding site is contributed by Y216. H264 contributes to the substrate binding site. H275, C282, C285, H286, H301, C314, C317, H318, and H393 together coordinate heme c.

This sequence belongs to the cytochrome c-552 family. Requires Ca(2+) as cofactor. Heme c serves as cofactor.

It localises to the periplasm. The catalysed reaction is 6 Fe(III)-[cytochrome c] + NH4(+) + 2 H2O = 6 Fe(II)-[cytochrome c] + nitrite + 8 H(+). It participates in nitrogen metabolism; nitrate reduction (assimilation). Its function is as follows. Catalyzes the reduction of nitrite to ammonia, consuming six electrons in the process. The sequence is that of Cytochrome c-552 from Escherichia coli (strain ATCC 8739 / DSM 1576 / NBRC 3972 / NCIMB 8545 / WDCM 00012 / Crooks).